The chain runs to 682 residues: UvrABC system protein B (682 aa).

A Helicase ATP-binding domain is found at 27–414 (DNIRAGVAHQ…SEGIVVEQII (388 aa)). 40–47 (GVTGSGKT) contributes to the ATP binding site. A Beta-hairpin motif is present at residues 93–116 (YYDYYQPEAYVPTSDTYIEKDSSI). Residues 432-594 (QMEDLMTECR…IEPVSVRKSL (163 aa)) form the Helicase C-terminal domain. Residues 609 to 628 (AAKGRGKGRGRQAAPAQTAA) are disordered. The 36-residue stretch at 642 to 677 (GGLIQRLEREMRESARDLEFEKAAELRDRIRMLRER) folds into the UVR domain.

This sequence belongs to the UvrB family. As to quaternary structure, forms a heterotetramer with UvrA during the search for lesions. Interacts with UvrC in an incision complex.

It is found in the cytoplasm. In terms of biological role, the UvrABC repair system catalyzes the recognition and processing of DNA lesions. A damage recognition complex composed of 2 UvrA and 2 UvrB subunits scans DNA for abnormalities. Upon binding of the UvrA(2)B(2) complex to a putative damaged site, the DNA wraps around one UvrB monomer. DNA wrap is dependent on ATP binding by UvrB and probably causes local melting of the DNA helix, facilitating insertion of UvrB beta-hairpin between the DNA strands. Then UvrB probes one DNA strand for the presence of a lesion. If a lesion is found the UvrA subunits dissociate and the UvrB-DNA preincision complex is formed. This complex is subsequently bound by UvrC and the second UvrB is released. If no lesion is found, the DNA wraps around the other UvrB subunit that will check the other stand for damage. This Oleidesulfovibrio alaskensis (strain ATCC BAA-1058 / DSM 17464 / G20) (Desulfovibrio alaskensis) protein is UvrABC system protein B.